The following is a 664-amino-acid chain: Sodium/glucose cotransporter 1 (664 aa).

At Met-1 to Arg-24 the chain is on the extracellular side. Residues Asn-25 to Met-47 traverse the membrane as a helical segment. At Phe-48 to Val-66 the chain is on the cytoplasmic side. The helical transmembrane segment at Trp-67–Thr-90 threads the bilayer. Residues Gly-91–Gly-95 lie on the Extracellular side of the membrane. A helical membrane pass occupies residues Ile-96–Val-117. Over Pro-118 to Gln-139 the chain is Cytoplasmic. Residues Arg-140 to Ile-169 form a helical membrane-spanning segment. Residues Asn-170 to Asp-176 lie on the Extracellular side of the membrane. Residues Leu-177–Ile-193 traverse the membrane as a helical segment. The Cytoplasmic portion of the chain corresponds to Thr-194 to Tyr-202. Residues Thr-203–Phe-221 form a helical membrane-spanning segment. The Extracellular segment spans residues Ala-222–Pro-275. Residue Asn-248 is glycosylated (N-linked (GlcNAc...) asparagine). 5 cysteine pairs are disulfide-bonded: Cys-255–Cys-511, Cys-255–Cys-610, Cys-345–Cys-351, Cys-355–Cys-361, and Cys-517–Cys-522. The helical transmembrane segment at Trp-276 to Gln-295 threads the bilayer. At Val-296–His-309 the chain is on the cytoplasmic side. The chain crosses the membrane as a helical span at residues Val-310 to Pro-331. The Extracellular portion of the chain corresponds to Gly-332–Pro-375. Residues Asn-376–Thr-406 traverse the membrane as a helical segment. At Met-407–Leu-422 the chain is on the cytoplasmic side. A helical transmembrane segment spans residues Met-423–Val-444. Topologically, residues Gln-445–Gln-451 are extracellular. Residues Leu-452–Cys-477 form a helical membrane-spanning segment. Gln-457 contacts D-glucose. At Lys-478–Asn-481 the chain is on the cytoplasmic side. Residues Glu-482 to Phe-504 form a helical membrane-spanning segment. The Extracellular portion of the chain corresponds to Ala-505–His-525. Residues Tyr-526–Phe-547 traverse the membrane as a helical segment. Over Thr-548–Val-644 the chain is Cytoplasmic. A helical transmembrane segment spans residues Val-645–Tyr-662. The Extracellular segment spans residues Phe-663–Ala-664.

Belongs to the sodium:solute symporter (SSF) (TC 2.A.21) family. In terms of processing, N-glycosylation is not necessary for the cotransporter function.

Its subcellular location is the apical cell membrane. The catalysed reaction is D-glucose(out) + 2 Na(+)(out) = D-glucose(in) + 2 Na(+)(in). The enzyme catalyses D-galactose(out) + 2 Na(+)(out) = D-galactose(in) + 2 Na(+)(in). Enhanced by the interaction with PDZK1IP1/MAP17; but unlike SLC5A2/SGLT2, PDZK1IP1 is not essential for SLC5A1 transporter activity. Possibly modulated by cholesterol binding. In terms of biological role, electrogenic Na(+)-coupled sugar symporter that actively transports D-glucose or D-galactose at the plasma membrane, with a Na(+) to sugar coupling ratio of 2:1. Transporter activity is driven by a transmembrane Na(+) electrochemical gradient set by the Na(+)/K(+) pump. Has a primary role in the transport of dietary monosaccharides from enterocytes to blood. Responsible for the absorption of D-glucose or D-galactose across the apical brush-border membrane of enterocytes, whereas basolateral exit is provided by GLUT2. Additionally, functions as a D-glucose sensor in enteroendocrine cells, triggering the secretion of the incretins GCG and GIP that control food intake and energy homeostasis. Together with SGLT2, functions in reabsorption of D-glucose from glomerular filtrate, playing a nonredundant role in the S3 segment of the proximal tubules. Transports D-glucose into endometrial epithelial cells, controlling glycogen synthesis and nutritional support for the embryo as well as the decidual transformation of endometrium prior to conception. Acts as a water channel enabling passive water transport in response to the osmotic gradient created upon sugar and Na(+) uptake. Has high water conductivity comparable to aquaporins and therefore is expected to play an important role in transepithelial water permeability, especially in the small intestine. This chain is Sodium/glucose cotransporter 1 (SLC5A1), found in Ovis aries (Sheep).